We begin with the raw amino-acid sequence, 602 residues long: Elongation factor 4 (602 aa).

The tr-type G domain maps to 7 to 189 (SKIRNFCIIA…AIVRRVPPPQ (183 aa)). GTP is bound by residues 19 to 24 (DHGKST) and 136 to 139 (NKVD).

The protein belongs to the TRAFAC class translation factor GTPase superfamily. Classic translation factor GTPase family. LepA subfamily.

The protein resides in the cell inner membrane. It carries out the reaction GTP + H2O = GDP + phosphate + H(+). Its function is as follows. Required for accurate and efficient protein synthesis under certain stress conditions. May act as a fidelity factor of the translation reaction, by catalyzing a one-codon backward translocation of tRNAs on improperly translocated ribosomes. Back-translocation proceeds from a post-translocation (POST) complex to a pre-translocation (PRE) complex, thus giving elongation factor G a second chance to translocate the tRNAs correctly. Binds to ribosomes in a GTP-dependent manner. In Prochlorococcus marinus (strain MIT 9215), this protein is Elongation factor 4.